The primary structure comprises 146 residues: Flagellar assembly factor FliW 1 (146 aa).

Belongs to the FliW family. As to quaternary structure, interacts with translational regulator CsrA and flagellin(s).

The protein resides in the cytoplasm. In terms of biological role, acts as an anti-CsrA protein, binds CsrA and prevents it from repressing translation of its target genes, one of which is flagellin. Binds to flagellin and participates in the assembly of the flagellum. This Helicobacter hepaticus (strain ATCC 51449 / 3B1) protein is Flagellar assembly factor FliW 1.